The chain runs to 347 residues: Protein PET130 (347 aa).

The protein resides in the mitochondrion matrix. This chain is Protein PET130 (PET130), found in Saccharomyces cerevisiae (strain ATCC 204508 / S288c) (Baker's yeast).